Here is a 262-residue protein sequence, read N- to C-terminus: MAGVARMLAAVVCAIMPAAAMAAGGVGALEPSGWVRAHATFYGGADASGTMGGACGYGNLYAQGYGTRTAALSTALFNDGLACGQCYKLVCDRKTDRTWCKPGVSVTITATNFCPPNWDLPSDSGGWCNPPRPHFDMAQPAWEKIGIYRGGIIPVIYQRVPCMKKGGVRFTINGHDYFQLVLLTNVGAAGSIKAMDVKGSKSPDWMAMAHNWGAQWHSLAYLTGQGLSFRVTITDGQTLVFPNVVRPGWRFGQTFASNIQFK.

A signal peptide spans 1–22; sequence MAGVARMLAAVVCAIMPAAAMA. One can recognise an Expansin-like EG45 domain in the interval 52-167; it reads GGACGYGNLY…QRVPCMKKGG (116 aa). Positions 177-257 constitute an Expansin-like CBD domain; that stretch reads YFQLVLLTNV…GWRFGQTFAS (81 aa).

Belongs to the expansin family. Expansin A subfamily. In terms of tissue distribution, expressed in roots and flowers.

It is found in the secreted. It localises to the cell wall. Its subcellular location is the membrane. In terms of biological role, may cause loosening and extension of plant cell walls by disrupting non-covalent bonding between cellulose microfibrils and matrix glucans. No enzymatic activity has been found. May be required for rapid internodal elongation in deepwater rice during submergence. The protein is Expansin-A13 (EXPA13) of Oryza sativa subsp. japonica (Rice).